The chain runs to 57 residues: Gene 19.3 protein (57 aa).

This chain is Gene 19.3 protein (19.3), found in Escherichia coli (Bacteriophage T3).